The chain runs to 136 residues: DNA-directed RNA polymerase subunit omega (136 aa).

Positions 90–102 are enriched in low complexity; the sequence is SSPAAAAVAPQSS. Positions 90–136 are disordered; it reads SSPAAAAVAPQSSSDDKDVQFDRMSEEDLLRGLENLAPPTETDDEGE. Positions 103–120 are enriched in basic and acidic residues; sequence SDDKDVQFDRMSEEDLLR.

This sequence belongs to the RNA polymerase subunit omega family. The RNAP catalytic core consists of 2 alpha, 1 beta, 1 beta' and 1 omega subunit. When a sigma factor is associated with the core the holoenzyme is formed, which can initiate transcription.

It carries out the reaction RNA(n) + a ribonucleoside 5'-triphosphate = RNA(n+1) + diphosphate. Promotes RNA polymerase assembly. Latches the N- and C-terminal regions of the beta' subunit thereby facilitating its interaction with the beta and alpha subunits. The polypeptide is DNA-directed RNA polymerase subunit omega (Methylorubrum populi (strain ATCC BAA-705 / NCIMB 13946 / BJ001) (Methylobacterium populi)).